Reading from the N-terminus, the 269-residue chain is NAD kinase (269 aa).

Aspartate 45 serves as the catalytic Proton acceptor. Residues 45-46 (DG), 122-123 (NE), arginine 149, aspartate 151, and alanine 186 each bind NAD(+).

The protein belongs to the NAD kinase family. Requires a divalent metal cation as cofactor.

It localises to the cytoplasm. The enzyme catalyses NAD(+) + ATP = ADP + NADP(+) + H(+). Functionally, involved in the regulation of the intracellular balance of NAD and NADP, and is a key enzyme in the biosynthesis of NADP. Catalyzes specifically the phosphorylation on 2'-hydroxyl of the adenosine moiety of NAD to yield NADP. The chain is NAD kinase from Staphylococcus saprophyticus subsp. saprophyticus (strain ATCC 15305 / DSM 20229 / NCIMB 8711 / NCTC 7292 / S-41).